The primary structure comprises 146 residues: VHWSAEEKQLITGLWGKVDVAEVGGATLGKLLVVFPWTQRFFAHFGNLSSANAIICNPVVKAHGKKVLTSFGEAIKHLDSIKETFAKLSELHCEKLHVDPENFRLLGNILIIVLAGHHGKEFTPSTHAAFQKLVRAVAHSLARVYH.

Residues 2 to 146 (HWSAEEKQLI…VAHSLARVYH (145 aa)) form the Globin domain. Residues His63 and His92 each contribute to the heme b site.

This sequence belongs to the globin family. Heterotetramer of two alpha chains and two beta chains. In terms of tissue distribution, red blood cells.

Involved in oxygen transport from the lung to the various peripheral tissues. This is Hemoglobin subunit beta (HBB) from Microcephalophis gracilis (Graceful small-headed sea snake).